Consider the following 245-residue polypeptide: 1-(5-phosphoribosyl)-5-[(5-phosphoribosylamino)methylideneamino] imidazole-4-carboxamide isomerase (245 aa).

The Proton acceptor role is filled by Asp-7. The active-site Proton donor is Asp-129.

It belongs to the HisA/HisF family.

It is found in the cytoplasm. It catalyses the reaction 1-(5-phospho-beta-D-ribosyl)-5-[(5-phospho-beta-D-ribosylamino)methylideneamino]imidazole-4-carboxamide = 5-[(5-phospho-1-deoxy-D-ribulos-1-ylimino)methylamino]-1-(5-phospho-beta-D-ribosyl)imidazole-4-carboxamide. Its pathway is amino-acid biosynthesis; L-histidine biosynthesis; L-histidine from 5-phospho-alpha-D-ribose 1-diphosphate: step 4/9. The chain is 1-(5-phosphoribosyl)-5-[(5-phosphoribosylamino)methylideneamino] imidazole-4-carboxamide isomerase from Cronobacter sakazakii (strain ATCC BAA-894) (Enterobacter sakazakii).